The chain runs to 828 residues: Periplasmic nitrate reductase (828 aa).

The tat-type signal signal peptide spans 1-33 (MKLSRRDFMKANAAVAAAAAAGLTIPTVVQAAA). One can recognise a 4Fe-4S Mo/W bis-MGD-type domain in the interval 39–95 (IKWDKAPCRFCGTGCGVLVGTQNGRIVASQGDPEAAVNRGLSCIKGYFLPKIMYGKD). Residues cysteine 46, cysteine 49, cysteine 53, and cysteine 81 each contribute to the [4Fe-4S] cluster site. Mo-bis(molybdopterin guanine dinucleotide)-binding positions include lysine 83, glutamine 150, asparagine 175, cysteine 179, 212–219 (WGSNMAEM), 243–247 (STFEH), 262–264 (QTD), methionine 372, glutamine 376, asparagine 482, 508–509 (SD), lysine 531, aspartate 558, and 718–727 (TGRVLEHWHT). Phenylalanine 794 contacts substrate. Mo-bis(molybdopterin guanine dinucleotide) is bound by residues asparagine 802 and lysine 819.

The protein belongs to the prokaryotic molybdopterin-containing oxidoreductase family. NasA/NapA/NarB subfamily. Component of the periplasmic nitrate reductase NapAB complex composed of NapA and NapB. The cofactor is [4Fe-4S] cluster. Mo-bis(molybdopterin guanine dinucleotide) serves as cofactor. In terms of processing, predicted to be exported by the Tat system. The position of the signal peptide cleavage has not been experimentally proven.

The protein resides in the periplasm. The catalysed reaction is 2 Fe(II)-[cytochrome] + nitrate + 2 H(+) = 2 Fe(III)-[cytochrome] + nitrite + H2O. Functionally, catalytic subunit of the periplasmic nitrate reductase complex NapAB. Receives electrons from NapB and catalyzes the reduction of nitrate to nitrite. The chain is Periplasmic nitrate reductase from Serratia proteamaculans (strain 568).